The primary structure comprises 322 residues: UDP-N-acetylenolpyruvoylglucosamine reductase (322 aa).

Residues 36–202 (RAGGPAQVLF…TSVLFEGVPG (167 aa)) enclose the FAD-binding PCMH-type domain. Residue Arg-182 is part of the active site. The active-site Proton donor is Ser-231. The active site involves Glu-301.

It belongs to the MurB family. FAD is required as a cofactor.

The protein resides in the cytoplasm. The enzyme catalyses UDP-N-acetyl-alpha-D-muramate + NADP(+) = UDP-N-acetyl-3-O-(1-carboxyvinyl)-alpha-D-glucosamine + NADPH + H(+). It functions in the pathway cell wall biogenesis; peptidoglycan biosynthesis. In terms of biological role, cell wall formation. The chain is UDP-N-acetylenolpyruvoylglucosamine reductase from Brucella canis (strain ATCC 23365 / NCTC 10854 / RM-666).